The primary structure comprises 492 residues: uncharacterized protein (492 aa).

Belongs to the FGGY kinase family.

This is an uncharacterized protein from Archaeoglobus fulgidus (strain ATCC 49558 / DSM 4304 / JCM 9628 / NBRC 100126 / VC-16).